Here is a 486-residue protein sequence, read N- to C-terminus: GTPase Obg (486 aa).

An Obg domain is found at 2-159 (SRFIDRVVLH…RELVLELKSV (158 aa)). Residues 160–340 (ADVGLVGFPS…LTFALAKLVA (181 aa)) form the OBG-type G domain. Residues 166–173 (GFPSAGKS), 191–195 (FTTLV), 212–215 (DVPG), 292–295 (NKAD), and 321–323 (SAV) each bind GTP. Positions 173 and 193 each coordinate Mg(2+). An OCT domain is found at 358 to 438 (PVISNENSFS…IGNVSFDWEP (81 aa)). The tract at residues 462–486 (RIGATERKHASRIRRGLEGLDPEDQ) is disordered.

It belongs to the TRAFAC class OBG-HflX-like GTPase superfamily. OBG GTPase family. As to quaternary structure, monomer. The cofactor is Mg(2+).

The protein resides in the cytoplasm. Functionally, an essential GTPase which binds GTP, GDP and possibly (p)ppGpp with moderate affinity, with high nucleotide exchange rates and a fairly low GTP hydrolysis rate. Plays a role in control of the cell cycle, stress response, ribosome biogenesis and in those bacteria that undergo differentiation, in morphogenesis control. This chain is GTPase Obg, found in Rhodococcus jostii (strain RHA1).